The sequence spans 532 residues: Amidophosphoribosyltransferase 3, chloroplastic (532 aa).

The N-terminal 59 residues, 1–59 (MAFSVEEISSILPNSLSANPRNVSQNTISPSFFKPSLKPYASKTLISLSCRRSLSPVFS), are a transit peptide targeting the chloroplast. The active-site Nucleophile is the cysteine 77. In terms of domain architecture, Glutamine amidotransferase type-2 spans 77 to 296 (CGVVGIHGDP…PGEIVVVDRN (220 aa)). Residues cysteine 313, cysteine 459, cysteine 511, and cysteine 514 each contribute to the [4Fe-4S] cluster site.

The protein in the C-terminal section; belongs to the purine/pyrimidine phosphoribosyltransferase family. [4Fe-4S] cluster serves as cofactor. Mg(2+) is required as a cofactor. As to expression, mostly expressed at low levels in leaves, and, to a lower extent, in cotyledons.

The protein localises to the plastid. Its subcellular location is the chloroplast stroma. It carries out the reaction 5-phospho-beta-D-ribosylamine + L-glutamate + diphosphate = 5-phospho-alpha-D-ribose 1-diphosphate + L-glutamine + H2O. It participates in purine metabolism; IMP biosynthesis via de novo pathway; N(1)-(5-phospho-D-ribosyl)glycinamide from 5-phospho-alpha-D-ribose 1-diphosphate: step 1/2. Inhibited by the phenyltriazole acetic acid compound [5-(4-chlorophenyl)-1-isopropyl-1H-[1,2,4]triazol-3-yl]-acetic acid (DAS734), a bleaching herbicide. Repressed by AMP, ADP, ATP and GTP, and slightly by GMP. In terms of biological role, catalyzes the first committed step of 'de novo' purine biosynthesis from glutamine. The chain is Amidophosphoribosyltransferase 3, chloroplastic (ASE3) from Arabidopsis thaliana (Mouse-ear cress).